A 338-amino-acid polypeptide reads, in one-letter code: Anthranilate phosphoribosyltransferase (338 aa).

5-phospho-alpha-D-ribose 1-diphosphate-binding positions include G81, 84 to 85 (GD), S89, 91 to 94 (NVST), 109 to 117 (KHGNRALSS), and A121. G81 contacts anthranilate. S93 is a binding site for Mg(2+). Residue N112 coordinates anthranilate. Position 167 (R167) interacts with anthranilate. Mg(2+) is bound by residues D226 and E227.

This sequence belongs to the anthranilate phosphoribosyltransferase family. In terms of assembly, homodimer. It depends on Mg(2+) as a cofactor.

The catalysed reaction is N-(5-phospho-beta-D-ribosyl)anthranilate + diphosphate = 5-phospho-alpha-D-ribose 1-diphosphate + anthranilate. The protein operates within amino-acid biosynthesis; L-tryptophan biosynthesis; L-tryptophan from chorismate: step 2/5. Functionally, catalyzes the transfer of the phosphoribosyl group of 5-phosphorylribose-1-pyrophosphate (PRPP) to anthranilate to yield N-(5'-phosphoribosyl)-anthranilate (PRA). The sequence is that of Anthranilate phosphoribosyltransferase from Rhodopseudomonas palustris (strain ATCC BAA-98 / CGA009).